A 278-amino-acid chain; its full sequence is uncharacterized protein (278 aa).

This is an uncharacterized protein from Escherichia coli (Bacteriophage T4).